Reading from the N-terminus, the 469-residue chain is UDP-N-acetylmuramate--L-alanine ligase (469 aa).

Position 120-126 (120-126 (GTHGKTT)) interacts with ATP.

Belongs to the MurCDEF family.

It is found in the cytoplasm. The catalysed reaction is UDP-N-acetyl-alpha-D-muramate + L-alanine + ATP = UDP-N-acetyl-alpha-D-muramoyl-L-alanine + ADP + phosphate + H(+). The protein operates within cell wall biogenesis; peptidoglycan biosynthesis. In terms of biological role, cell wall formation. The protein is UDP-N-acetylmuramate--L-alanine ligase of Acetivibrio thermocellus (strain ATCC 27405 / DSM 1237 / JCM 9322 / NBRC 103400 / NCIMB 10682 / NRRL B-4536 / VPI 7372) (Clostridium thermocellum).